Reading from the N-terminus, the 309-residue chain is Taste receptor type 2 member 43 (309 aa).

Position 1 (M1) is a topological domain, extracellular. A helical transmembrane segment spans residues 2-22 (ITFLPIIFSSLVVVTFVIGNF). Topologically, residues 23–46 (ANGFIALVNSIEWFKRQKISFADQ) are cytoplasmic. A helical membrane pass occupies residues 47 to 67 (ILTALAVSRVGLLWVLLLNWY). The Extracellular segment spans residues 68-86 (STVLNPAFNSVEVRTTAYN). A helical membrane pass occupies residues 87–107 (IWAVINHFSNWLATTLSIFYL). Residues 108 to 126 (LKIANFSNFIFLHLKRRVK) are Cytoplasmic-facing. A helical membrane pass occupies residues 127-147 (SVILVMLLGPLLFLACHLFVI). Residues 148 to 178 (NMNEIVRTKEFEGNMTWKIKLKSAMYFSNMT) lie on the Extracellular side of the membrane. 2 N-linked (GlcNAc...) asparagine glycosylation sites follow: N161 and N176. A helical transmembrane segment spans residues 179–199 (VTMVANLVPFTLTLLSFMLLI). The Cytoplasmic portion of the chain corresponds to 200-229 (CSLCKHLKKMQLHGKGSQDPSTKVHIKALQ). Residues 230–250 (TVISFLLLCAIYFLSIMISVW) form a helical membrane-spanning segment. The Extracellular segment spans residues 251–259 (SFGSLENKP). Residues 260–280 (VFMFCKAIRFSYPSIHPFILI) form a helical membrane-spanning segment. Residues 281–309 (WGNKKLKQTFLSVFWQMRYWVKGEKTSSP) lie on the Cytoplasmic side of the membrane.

Belongs to the G-protein coupled receptor T2R family. Expressed in subsets of taste receptor cells of the tongue and exclusively in gustducin-positive cells. Expressed in airway epithelia.

The protein resides in the membrane. It localises to the cell projection. Its subcellular location is the cilium membrane. In terms of biological role, gustducin-coupled receptor immplicated in the perception of bitter compounds in the oral cavity and the gastrointestinal tract. Signals through PLCB2 and the calcium-regulated cation channel TRPM5. Activated by the sulfonyl amide sweeteners saccharin and acesulfame K. In airway epithelial cells, binding of bitter compounds increases the intracellular calcium ion concentration and stimulates ciliary beat frequency. May act as chemosensory receptors in airway epithelial cells to detect and eliminate potential noxious agents from the airways. This is Taste receptor type 2 member 43 (TAS2R43) from Homo sapiens (Human).